We begin with the raw amino-acid sequence, 466 residues long: Alpha-1A adrenergic receptor (466 aa).

Residues 1-27 (MVFLSGNASDSSNCTQPPAPVNISKAI) lie on the Extracellular side of the membrane. N-linked (GlcNAc...) asparagine glycosylation is found at asparagine 7, asparagine 13, and asparagine 22. Residues 28 to 51 (LLGVILGGLILFGVLGNILVILSV) traverse the membrane as a helical segment. Over 52–64 (ACHRHLHSVTHYY) the chain is Cytoplasmic. The helical transmembrane segment at 65-88 (IVNLAVADLLLTSTVLPFSAIFEV) threads the bilayer. Residues 89–99 (LGYWAFGRVFC) are Extracellular-facing. Cysteine 99 and cysteine 176 are disulfide-bonded. Residues 100–122 (NIWAAVDVLCCTASIMGLCIISI) form a helical membrane-spanning segment. At 123 to 143 (DRYIGVSYPLRYPTIVTQRRG) the chain is on the cytoplasmic side. A helical transmembrane segment spans residues 144–167 (LMALLCVWALSLVISIGPLFGWRQ). Topologically, residues 168–181 (PAPEDETICQINEE) are extracellular. The helical transmembrane segment at 182 to 205 (PGYVLFSALGSFYLPLAIILVMYC) threads the bilayer. Residues 206–273 (RVYVVAKRES…FSREKKAAKT (68 aa)) lie on the Cytoplasmic side of the membrane. Phosphoserine; by PKA is present on serine 215. Residues 274–297 (LGIVVGCFVLCWLPFFLVMPIGSF) traverse the membrane as a helical segment. Topologically, residues 298 to 305 (FPDFKPSE) are extracellular. A helical membrane pass occupies residues 306–329 (TVFKIVFWLGYLNSCINPIIYPCS). At 330–466 (SQEFKKAFQN…ISLSENGEEV (137 aa)) the chain is on the cytoplasmic side. Positions 334 to 349 (KKAFQNVLRIQCLCRK) match the Nuclear localization signal motif. Residue cysteine 345 is the site of S-palmitoyl cysteine attachment.

It belongs to the G-protein coupled receptor 1 family. Adrenergic receptor subfamily. ADRA1A sub-subfamily. As to quaternary structure, homo- and heterooligomer. Heterooligomerizes with ADRA1B homooligomers in cardiac myocytes. Interacts with CAVIN4. C-terminal Ser or Thr residues may be phosphorylated. In terms of tissue distribution, expressed in heart, brain, liver and prostate, but not in kidney, lung, adrenal, aorta and pituitary. Within the prostate, expressed in the apex, base, periurethral and lateral lobe. Isoform 4 is the most abundant isoform expressed in the prostate with high levels also detected in liver and heart.

It is found in the nucleus membrane. The protein resides in the cell membrane. The protein localises to the cytoplasm. Its subcellular location is the membrane. It localises to the caveola. Its function is as follows. This alpha-adrenergic receptor mediates its action by association with G proteins that activate a phosphatidylinositol-calcium second messenger system. Its effect is mediated by G(q) and G(11) proteins. Nuclear ADRA1A-ADRA1B heterooligomers regulate phenylephrine(PE)-stimulated ERK signaling in cardiac myocytes. This chain is Alpha-1A adrenergic receptor (ADRA1A), found in Homo sapiens (Human).